Here is a 429-residue protein sequence, read N- to C-terminus: Enolase (429 aa).

Gln-162 contacts (2R)-2-phosphoglycerate. Catalysis depends on Glu-204, which acts as the Proton donor. Positions 241, 286, and 313 each coordinate Mg(2+). (2R)-2-phosphoglycerate is bound by residues Lys-338, Arg-367, Ser-368, and Lys-389. The Proton acceptor role is filled by Lys-338.

It belongs to the enolase family. It depends on Mg(2+) as a cofactor.

It localises to the cytoplasm. The protein resides in the secreted. Its subcellular location is the cell surface. The catalysed reaction is (2R)-2-phosphoglycerate = phosphoenolpyruvate + H2O. Its pathway is carbohydrate degradation; glycolysis; pyruvate from D-glyceraldehyde 3-phosphate: step 4/5. Its function is as follows. Catalyzes the reversible conversion of 2-phosphoglycerate (2-PG) into phosphoenolpyruvate (PEP). It is essential for the degradation of carbohydrates via glycolysis. The protein is Enolase of Halalkalibacterium halodurans (strain ATCC BAA-125 / DSM 18197 / FERM 7344 / JCM 9153 / C-125) (Bacillus halodurans).